The chain runs to 274 residues: Rhamnulose-1-phosphate aldolase (274 aa).

The active site involves Glu117. Zn(2+) is bound by residues His141, His143, and His212.

This sequence belongs to the aldolase class II family. RhaD subfamily. Homotetramer. It depends on Zn(2+) as a cofactor.

It is found in the cytoplasm. The catalysed reaction is L-rhamnulose 1-phosphate = (S)-lactaldehyde + dihydroxyacetone phosphate. It participates in carbohydrate degradation; L-rhamnose degradation; glycerone phosphate from L-rhamnose: step 3/3. In terms of biological role, catalyzes the reversible cleavage of L-rhamnulose-1-phosphate to dihydroxyacetone phosphate (DHAP) and L-lactaldehyde. This is Rhamnulose-1-phosphate aldolase from Escherichia coli (strain K12 / MC4100 / BW2952).